We begin with the raw amino-acid sequence, 303 residues long: Signal recognition particle receptor FtsY (303 aa).

Residues glycine 108 to threonine 115, aspartate 190 to arginine 194, and threonine 254 to aspartate 257 each bind GTP.

The protein belongs to the GTP-binding SRP family. FtsY subfamily. In terms of assembly, part of the signal recognition particle protein translocation system, which is composed of SRP and FtsY. SRP is a ribonucleoprotein composed of Ffh and a 4.5S RNA molecule.

Its subcellular location is the cell inner membrane. It is found in the cytoplasm. It catalyses the reaction GTP + H2O = GDP + phosphate + H(+). Its function is as follows. Involved in targeting and insertion of nascent membrane proteins into the cytoplasmic membrane. Acts as a receptor for the complex formed by the signal recognition particle (SRP) and the ribosome-nascent chain (RNC). Interaction with SRP-RNC leads to the transfer of the RNC complex to the Sec translocase for insertion into the membrane, the hydrolysis of GTP by both Ffh and FtsY, and the dissociation of the SRP-FtsY complex into the individual components. In Rickettsia typhi (strain ATCC VR-144 / Wilmington), this protein is Signal recognition particle receptor FtsY.